The primary structure comprises 255 residues: Hydroxyacylglutathione hydrolase (255 aa).

Zn(2+)-binding residues include H56, H58, D60, H61, H114, D133, and H171.

This sequence belongs to the metallo-beta-lactamase superfamily. Glyoxalase II family. Monomer. The cofactor is Zn(2+).

It catalyses the reaction an S-(2-hydroxyacyl)glutathione + H2O = a 2-hydroxy carboxylate + glutathione + H(+). The protein operates within secondary metabolite metabolism; methylglyoxal degradation; (R)-lactate from methylglyoxal: step 2/2. Its function is as follows. Thiolesterase that catalyzes the hydrolysis of S-D-lactoyl-glutathione to form glutathione and D-lactic acid. In Rhodopseudomonas palustris (strain BisA53), this protein is Hydroxyacylglutathione hydrolase.